Consider the following 374-residue polypeptide: Chaperone protein DnaJ (374 aa).

Residues 4–68 (DYYEILGVSR…ETRNRYDRFG (65 aa)) enclose the J domain. The segment at 133 to 215 (GGEKEIRIRH…CGGSGRRQET (83 aa)) adopts a CR-type zinc-finger fold. 8 residues coordinate Zn(2+): C146, C149, C163, C166, C189, C192, C203, and C206. CXXCXGXG motif repeat units follow at residues 146–153 (CQTCKGSG), 163–170 (CTTCSGTG), 189–196 (CPTCDGAG), and 203–210 (CDVCGGSG).

It belongs to the DnaJ family. In terms of assembly, homodimer. Requires Zn(2+) as cofactor.

Its subcellular location is the cytoplasm. In terms of biological role, participates actively in the response to hyperosmotic and heat shock by preventing the aggregation of stress-denatured proteins and by disaggregating proteins, also in an autonomous, DnaK-independent fashion. Unfolded proteins bind initially to DnaJ; upon interaction with the DnaJ-bound protein, DnaK hydrolyzes its bound ATP, resulting in the formation of a stable complex. GrpE releases ADP from DnaK; ATP binding to DnaK triggers the release of the substrate protein, thus completing the reaction cycle. Several rounds of ATP-dependent interactions between DnaJ, DnaK and GrpE are required for fully efficient folding. Also involved, together with DnaK and GrpE, in the DNA replication of plasmids through activation of initiation proteins. The protein is Chaperone protein DnaJ of Microcystis aeruginosa (strain NIES-843 / IAM M-2473).